Consider the following 428-residue polypeptide: UPF0229 protein YeaH (428 aa).

Positions 78–90 (GNDHFIQNDRIER) are enriched in basic and acidic residues. The segment at 78–111 (GNDHFIQNDRIERPQGGGGGGSGSGQGQASQDGE) is disordered. A compositionally biased stretch (gly residues) spans 92-103 (QGGGGGGSGSGQ).

The protein belongs to the UPF0229 family.

This is UPF0229 protein YeaH from Salmonella enteritidis PT4 (strain P125109).